The primary structure comprises 141 residues: Putative pre-16S rRNA nuclease (141 aa).

It belongs to the YqgF nuclease family.

Its subcellular location is the cytoplasm. In terms of biological role, could be a nuclease involved in processing of the 5'-end of pre-16S rRNA. This Chlorobium luteolum (strain DSM 273 / BCRC 81028 / 2530) (Pelodictyon luteolum) protein is Putative pre-16S rRNA nuclease.